The following is a 484-amino-acid chain: Replication factor C large subunit (484 aa).

Position 46-53 (46-53 (GPPGSGKT)) interacts with ATP. The segment covering 463 to 478 (NADTKEKEKKDPKKQA) has biased composition (basic and acidic residues). Residues 463–484 (NADTKEKEKKDPKKQATLDSFF) form a disordered region.

The protein belongs to the activator 1 small subunits family. RfcL subfamily. In terms of assembly, heteromultimer composed of small subunits (RfcS) and large subunits (RfcL).

Part of the RFC clamp loader complex which loads the PCNA sliding clamp onto DNA. The polypeptide is Replication factor C large subunit (Methanococcus maripaludis (strain C6 / ATCC BAA-1332)).